A 243-amino-acid polypeptide reads, in one-letter code: Ribosomal RNA small subunit methyltransferase G (243 aa).

S-adenosyl-L-methionine contacts are provided by residues G82, F87, 133–134 (AE), and R152.

The protein belongs to the methyltransferase superfamily. RNA methyltransferase RsmG family.

It localises to the cytoplasm. Functionally, specifically methylates the N7 position of a guanine in 16S rRNA. The polypeptide is Ribosomal RNA small subunit methyltransferase G (Clostridium novyi (strain NT)).